A 328-amino-acid chain; its full sequence is Probable cell division protein WhiA (328 aa).

The segment at residues 275 to 308 is a DNA-binding region (H-T-H motif); it reads SLEELGQLHDPVLTKDAIAGRIRRLLAMADKRAE.

This sequence belongs to the WhiA family.

In terms of biological role, involved in cell division and chromosome segregation. The sequence is that of Probable cell division protein WhiA from Nocardioides sp. (strain ATCC BAA-499 / JS614).